A 356-amino-acid chain; its full sequence is DNA polymerase IV (356 aa).

A UmuC domain is found at 7 to 188; that stretch reads IIHIDMDCFY…LPLKKIPGVG (182 aa). Residues Asp11 and Asp106 each coordinate Mg(2+). Glu107 is a catalytic residue.

Belongs to the DNA polymerase type-Y family. In terms of assembly, monomer. Mg(2+) serves as cofactor.

It localises to the cytoplasm. It catalyses the reaction DNA(n) + a 2'-deoxyribonucleoside 5'-triphosphate = DNA(n+1) + diphosphate. Its function is as follows. Poorly processive, error-prone DNA polymerase involved in untargeted mutagenesis. Copies undamaged DNA at stalled replication forks, which arise in vivo from mismatched or misaligned primer ends. These misaligned primers can be extended by PolIV. Exhibits no 3'-5' exonuclease (proofreading) activity. May be involved in translesional synthesis, in conjunction with the beta clamp from PolIII. This Actinobacillus pleuropneumoniae serotype 3 (strain JL03) protein is DNA polymerase IV.